The following is a 726-amino-acid chain: MNSLQSLCVLCARLNECALDLECLKFCDPVIVLSDMANFKKNGIVILHLYQTFFEGIKEQNLLCASALTVYMQVLLKAMYEQVLLLDAALESFMVDQDRKKYFEKVLCLKRCAEHLSINISLNNGVEFIVQLSTLNDIEQLISKINSVYALLLPQEGLQICGKIIDLLTIMCGACMVAKPESYLETKTCMKCYEELTLTPNQGKSLRKRLHGKFCNHLTEQKAFFNIEKNIETIEKDLGEAILNYGTIQSVVTEIKKIFKQQRSAESLHVSDAEKTLKKYNIFSKVPDVIYSLSEFTYWSKISETIVRNVAITLQQLNSCHTLYKQLQNDVSLYLYGEVSEDFLALSENLLTHDERLYVGSIYVSPSRLIDLVTGLSIKNLEESPIFKRLAEEDEVQHKIKSLLHDIRDPQTTETPGRLNTINCMLQTHNLQQEVLARKKAYFQKVSESGYNRVMACIREQESLINKVVSVNVYGNFIFEALSKIMNGFVLRKMYLDGSIRVDSCTYDEHLYIKNNLMPKKLPLELLPDLSEIMYTLLTGPLSDFHKSAYPLPANISMAYGCDHAEMLPHMKEDLARCIEGTIHPSVWMVCEYNEFFNFSGVTDVNDMQKKMWNFIRELTLSVALYNDVFGKRLKIVRIDEEEDLNGNVVLTFNHESPLLFHTGGGMTKFKDVYSLLYCDLQAQLSRETVDVPEGVSYSVRTPNLLDLVRENEQDESIIPGCLFDE.

Residues 189–217 (CMKCYEELTLTPNQGKSLRKRLHGKFCNH) form a C3H1-type zinc finger. 626 to 633 (YNDVFGKR) is an ATP binding site.

The protein belongs to the herpesviridae TRM1 protein family. In terms of assembly, associates with TRM2 and TRM3 to form the tripartite terminase complex. Interacts with portal protein.

The protein localises to the host nucleus. In terms of biological role, component of the molecular motor that translocates viral genomic DNA in empty capsid during DNA packaging. Forms a tripartite terminase complex together with TRM2 and TRM3 in the host cytoplasm. Once the complex reaches the host nucleus, it interacts with the capsid portal vertex. This portal forms a ring in which genomic DNA is translocated into the capsid. TRM1 carries an endonuclease activity that plays an important role for the cleavage of concatemeric viral DNA into unit length genomes. The polypeptide is Tripartite terminase subunit 1 (Human herpesvirus 6B (strain Z29) (HHV-6 variant B)).